The primary structure comprises 76 residues: Secreted RxLR effector protein 31 (76 aa).

The N-terminal stretch at 1–24 (MRHCACLFHLFLIGFLCNVYFSAC) is a signal peptide. Positions 49–64 (RILRANDSEFLLTEER) match the RxLR-dEER motif. A glycan (N-linked (GlcNAc...) asparagine) is linked at Asn54.

The protein belongs to the RxLR effector family.

The protein localises to the secreted. Its subcellular location is the host nucleus. It is found in the host cytoplasm. Its function is as follows. Secreted effector that dos not suppress the host cell death induced by cell death-inducing proteins. This is Secreted RxLR effector protein 31 from Plasmopara viticola (Downy mildew of grapevine).